A 278-amino-acid polypeptide reads, in one-letter code: NAD kinase (278 aa).

Residue aspartate 67 is the Proton acceptor of the active site. Residues 67-68, arginine 72, 137-138, lysine 148, arginine 165, aspartate 167, 178-183, and glutamine 237 contribute to the NAD(+) site; these read DG, NE, and TGYALS.

It belongs to the NAD kinase family. A divalent metal cation is required as a cofactor.

It is found in the cytoplasm. The catalysed reaction is NAD(+) + ATP = ADP + NADP(+) + H(+). Its function is as follows. Involved in the regulation of the intracellular balance of NAD and NADP, and is a key enzyme in the biosynthesis of NADP. Catalyzes specifically the phosphorylation on 2'-hydroxyl of the adenosine moiety of NAD to yield NADP. The protein is NAD kinase of Thermococcus gammatolerans (strain DSM 15229 / JCM 11827 / EJ3).